We begin with the raw amino-acid sequence, 38 residues long: Large ribosomal subunit protein bL36 (38 aa).

This sequence belongs to the bacterial ribosomal protein bL36 family.

The polypeptide is Large ribosomal subunit protein bL36 (Psychrobacter arcticus (strain DSM 17307 / VKM B-2377 / 273-4)).